A 357-amino-acid chain; its full sequence is Protein RecA (357 aa).

71 to 78 is a binding site for ATP; that stretch reads GPESSGKT.

This sequence belongs to the RecA family.

The protein localises to the cytoplasm. In terms of biological role, can catalyze the hydrolysis of ATP in the presence of single-stranded DNA, the ATP-dependent uptake of single-stranded DNA by duplex DNA, and the ATP-dependent hybridization of homologous single-stranded DNAs. It interacts with LexA causing its activation and leading to its autocatalytic cleavage. This chain is Protein RecA, found in Ehrlichia ruminantium (strain Gardel).